The following is a 336-amino-acid chain: Phosphate acyltransferase (336 aa).

This sequence belongs to the PlsX family. As to quaternary structure, homodimer. Probably interacts with PlsY.

Its subcellular location is the cytoplasm. The enzyme catalyses a fatty acyl-[ACP] + phosphate = an acyl phosphate + holo-[ACP]. Its pathway is lipid metabolism; phospholipid metabolism. Its function is as follows. Catalyzes the reversible formation of acyl-phosphate (acyl-PO(4)) from acyl-[acyl-carrier-protein] (acyl-ACP). This enzyme utilizes acyl-ACP as fatty acyl donor, but not acyl-CoA. The polypeptide is Phosphate acyltransferase (Pseudomonas putida (strain ATCC 47054 / DSM 6125 / CFBP 8728 / NCIMB 11950 / KT2440)).